The chain runs to 393 residues: Pyrimidine monooxygenase RutA (393 aa).

Residues 79–80 (IK), asparagine 145, glutamate 154, 170–171 (RY), and serine 220 each bind FMN.

Belongs to the NtaA/SnaA/DszA monooxygenase family. RutA subfamily.

The catalysed reaction is uracil + FMNH2 + NADH + O2 = (Z)-3-ureidoacrylate + FMN + NAD(+) + H2O + H(+). It catalyses the reaction thymine + FMNH2 + NADH + O2 = (Z)-2-methylureidoacrylate + FMN + NAD(+) + H2O + H(+). Catalyzes the pyrimidine ring opening between N-3 and C-4 by an unusual flavin hydroperoxide-catalyzed mechanism, adding oxygen atoms in the process to yield ureidoacrylate peracid, that immediately reacts with FMN forming ureidoacrylate and FMN-N(5)-oxide. The FMN-N(5)-oxide reacts spontaneously with NADH to produce FMN. Requires the flavin reductase RutF to regenerate FMN in vivo. The sequence is that of Pyrimidine monooxygenase RutA from Escherichia coli O18:K1:H7 (strain IHE3034 / ExPEC).